A 391-amino-acid chain; its full sequence is ETS-related transcription factor Elf-3 (391 aa).

The PNT domain occupies aspartate 65–serine 151. The tract at residues tyrosine 200–arginine 271 is disordered. Positions proline 211–alanine 229 are enriched in polar residues. Residues threonine 242–lysine 261 show a composition bias toward basic and acidic residues. Residues histidine 262–arginine 271 show a composition bias toward basic residues. A DNA-binding region (ETS) is located at residues threonine 293–glycine 375.

Belongs to the ETS family. In terms of assembly, interacts with TBP. Interacts with CREBBP and EP300; these act as transcriptional coactivators of ELF3 and positively modulate its function. Interacts with XRCC5/KU86 and XRCC6/KU70; these inhibit the ability of ELF3 to bind DNA and negatively modulate its transcriptional activity. Associated with CLND7 and POU2F3. Interacts with ZNF768. As to expression, expressed in small intestine, colon, lung, kidney and uterus. Also expressed in the corneal epithelium and conjunctiva of the developing and adult eye. Not detected in liver, spleen, thymus, brain, heart, skeletal muscle or ovary.

The protein localises to the cytoplasm. It is found in the nucleus. Functionally, transcriptional activator that binds and transactivates ETS sequences containing the consensus nucleotide core sequence GGA[AT]. Acts synergistically with POU2F3 to transactivate the SPRR2A promoter and with RUNX1 to transactivate the ANGPT1 promoter. Also transactivates collagenase, CCL20, CLND7, FLG, KRT8, NOS2, PTGS2, SPRR2B, TGFBR2 and TGM3 promoters. Represses KRT4 promoter activity. Involved in mediating vascular inflammation. May play an important role in epithelial cell differentiation and tumorigenesis. May be a critical downstream effector of the ERBB2 signaling pathway. May be associated with mammary gland development and involution. Plays an important role in the regulation of transcription with TATA-less promoters in preimplantation embryos, which is essential in preimplantation development. The protein is ETS-related transcription factor Elf-3 of Mus musculus (Mouse).